The primary structure comprises 587 residues: 2-succinyl-5-enolpyruvyl-6-hydroxy-3-cyclohexene-1-carboxylate synthase (587 aa).

This sequence belongs to the TPP enzyme family. MenD subfamily. As to quaternary structure, homodimer. The cofactor is Mg(2+). Mn(2+) serves as cofactor. Requires thiamine diphosphate as cofactor.

It carries out the reaction isochorismate + 2-oxoglutarate + H(+) = 5-enolpyruvoyl-6-hydroxy-2-succinyl-cyclohex-3-ene-1-carboxylate + CO2. It participates in quinol/quinone metabolism; 1,4-dihydroxy-2-naphthoate biosynthesis; 1,4-dihydroxy-2-naphthoate from chorismate: step 2/7. Its pathway is cofactor biosynthesis; phylloquinone biosynthesis. In terms of biological role, catalyzes the thiamine diphosphate-dependent decarboxylation of 2-oxoglutarate and the subsequent addition of the resulting succinic semialdehyde-thiamine pyrophosphate anion to isochorismate to yield 2-succinyl-5-enolpyruvyl-6-hydroxy-3-cyclohexene-1-carboxylate (SEPHCHC). This is 2-succinyl-5-enolpyruvyl-6-hydroxy-3-cyclohexene-1-carboxylate synthase from Prochlorococcus marinus (strain MIT 9301).